Consider the following 353-residue polypeptide: uncharacterized protein (353 aa).

Disordered regions lie at residues 1–24 (MSTSRNVPNKKNNTKQQKYQQQSQ), 245–280 (NKSSNRTHHKSGDKSTVKSTDKQVEKKVEESSEKVP), and 305–353 (AAGK…DLNN). A compositionally biased stretch (low complexity) spans 9–24 (NKKNNTKQQKYQQQSQ). Over residues 254–280 (KSGDKSTVKSTDKQVEKKVEESSEKVP) the composition is skewed to basic and acidic residues. Residues 321 to 332 (VTTSTSESTVEV) are compositionally biased toward low complexity. Acidic residues predominate over residues 342 to 353 (EPDEEVFEDLNN).

This is an uncharacterized protein from Acanthamoeba polyphaga mimivirus (APMV).